A 1253-amino-acid polypeptide reads, in one-letter code: MAAQVTLEDALSNVDLLEELPLPDQQPCIEPPPSSLLYQPNFNTNFEDRNAFVTGIARYIEQATVHSSMNEMLEEGQEYAVMLYTWRSCSRAIPQVKCNEQPNRVEIYEKTVEVLEPEVTKLMNFMYFQRNAIERFCGEVRRLCHAERRKDFVSEAYLITLGKFINMFAVLDELKNMKCSVKNDHSAYKRAAQFLRKMADPQSIQESQNLSMFLANHNKITQSLQQQLEVISGYEELLADIVNLCVDYYENRMYLTPSEKHMLLKVMGFGLYLMDGSVSNIYKLDAKKRINLSKIDKYFKQLQVVPLFGDMQIELARYIKTSAHYEENKSRWTCASSSSSPQYNICEQMIQIREDHMRFISELARYSNSEVVTGSGRQEAQKTDAEYRKLFDLALQGLQLLSQWSAHVMEVYSWKLVHPTDKYSNKDCPDNAEEYERATRYNYTTEEKFALVEVIAMIKGLQVLMGRMESVFNHAIRHTVYAALQDFSQVTLREPLRQAIKKKKNVIQSVLQAIRKTVCDWETGHEPFNDPALRGEKDPKSGFDIKVPRRAVGPSSTQLYMVRTMLESLIADKSGSKKTLRSSLEGPTILDIEKFHRESFFYTHLINFSETLQQCCDLSQLWFREFFLELTMGRRIQFPIEMSMPWILTDHILETKEASMMEYVLYSLDLYNDSAHYALTKFNKQFLYDEIEAEVNLCFDQFVYKLADQIFAYYKVMAGSLLLDKRLRSECKNQGATIHLPPSNRYETLLKQRHVQLLGRSIDLNRLITQRVSAAMYKSLELAIGRFESEDLTSVVELDGLLEINRMTHKLLSRYLTLDSFDAMFREANHNVSAPYGRITLHVFWELNYDFLPNYCYNGSTNRFVRTVLPFSQEFQRDKQPNAQPQYLHGSKALNLAYSSIYGSYRNFVGPPHFQVICRLLGYQGIAVVMEELLKVVKSLLQGTILQYVKTLMEVMPKICRLPRHEYGSPGILEFFHHQLKDIVEYAELKTVCFQNLREVGNAVLFCLLIEQSLSLEEVCDLLHAAPFQNILPRIHVKEGERVDAKMKRLESKYAPLHLVPLIERLGTPQQIAIAREGDLLTKERLCCGLSMFEVILTRIRTFLDDPIWRGPLPSNGVMHVDECVEFHRLWSAMQFVYCIPVGTHEFTVEQCFGDGLHWAGCMIIVLLGQQRRFAVLDFCYHLLKVQKHDGKDEIIKNVPLKKMVERIRKFQILNDEIITILDKYLKSGDGESTPVEHVRCFQPPIHQSLASS.

The residue at position 583 (S583) is a Phosphoserine. An EIF4E-binding region spans residues 724 to 732; that stretch reads DKRLRSECK. A Phosphothreonine modification is found at T1234.

This sequence belongs to the CYFIP family. Component of the WAVE1 complex composed of ABI2, CYFIP1 or CYFIP2, BRK1, NCKAP1 and WASF1/WAVE1. Within the complex, a heterodimer containing NCKAP1 and CYFIP1 interacts with a heterotrimer formed by WAVE1, ABI2 and BRK1. Component of the CYFIP1-EIF4E-FMR1 complex which is composed of CYFIP, EIF4E and FMR1. Interacts with FMR1 but does not bind to related proteins FXR1 or FXR2. Interaction with EIF4E stimulates FMR1 binding. Component of the WAVE2 complex composed of ABI1, CYFIP1/SRA1, NCKAP1/NAP1 (NCKAP1L/HEM1 in hematopoietic cells) and WASF2/WAVE2. Interacts with the active GTP-bound form of RAC1. Interacts through its C-terminus with the C-terminus of DPYSL2/CRMP2 which is necessary for DPYSL2-induced axon outgrowth. Interacts with NYAP1, NYAP2 and MYO16. Interacts with TMEM108 (via N-terminus); the interaction associates TMEM108 with the WAVE1 complex. Highly expressed in embryonic and adult developing nervous system.

The protein resides in the cytoplasm. Its subcellular location is the perinuclear region. It localises to the cell projection. It is found in the lamellipodium. The protein localises to the ruffle. The protein resides in the synapse. Its subcellular location is the synaptosome. In terms of biological role, component of the CYFIP1-EIF4E-FMR1 complex which binds to the mRNA cap and mediates translational repression. In the CYFIP1-EIF4E-FMR1 complex this subunit is an adapter between EIF4E and FMR1. Promotes the translation repression activity of FMR1 in brain probably by mediating its association with EIF4E and mRNA. Regulates formation of membrane ruffles and lamellipodia. Plays a role in axon outgrowth. Binds to F-actin but not to RNA. Part of the WAVE complex that regulates actin filament reorganization via its interaction with the Arp2/3 complex. Actin remodeling activity is regulated by RAC1. Regulator of epithelial morphogenesis. May act as an invasion suppressor in cancers. As component of the WAVE1 complex, required for BDNF-NTRK2 endocytic trafficking and signaling from early endosomes. In Mus musculus (Mouse), this protein is Cytoplasmic FMR1-interacting protein 1.